Consider the following 87-residue polypeptide: X protein (87 aa).

The tract at residues 5–16 (LRLTLLELVRRL) is nuclear export signal. The disordered stretch occupies residues 18-87 (GNATIESGRL…PANRKGAAVE (70 aa)). Low complexity predominate over residues 36–48 (DTTTGTTGVTKTT).

In terms of assembly, interacts with P and N proteins. These interactions presumably promote nuclear targeting of the X protein in infected cells. Interacts with host MAVS; this interaction inhibits MAVS-induced apoptosis. Post-translationally, phosphorylated.

The protein localises to the host nucleus. Its subcellular location is the host mitochondrion. Plays an essential role in the inhibition of host apoptosis. Mediates host mitochondria-mediated apoptosis through interaction with the mitochondrial antiviral signaling protein/MAVS and thereby promotes viral persistence in host central nervous system. Within the host nucleus, regulates viral RNA synthesis and polymerase complex assembly. This chain is X protein (P/X), found in Borna disease virus 1 (BoDV-1).